The following is a 225-amino-acid chain: MENLKKMAGIKAAEFVTDGMVVGLGTGSTAYYFVEEIGRRIKEEGLQIIAVTTSSVTSQQAEGLGIPLKSIDEVDLVDVTVDGADEVDPNFNGIKGGGGALLMEKVVATPTKSYIWVVDESKLVEKLGAFKLPVEVVQYGAEQVFRRFERAGYKPAFRQKDGQRFVTDMKNFIIDLDLGVIENPIEFARELDHIVGIVEHGLFNQMVDKVIVAGKAGVQVLEANK.

Substrate is bound by residues 26 to 29 (TGST), 82 to 85 (DGAD), and 95 to 98 (KGGG). The active-site Proton acceptor is Glu-104. A substrate-binding site is contributed by Lys-122.

This sequence belongs to the ribose 5-phosphate isomerase family. As to quaternary structure, homodimer.

It carries out the reaction aldehydo-D-ribose 5-phosphate = D-ribulose 5-phosphate. The protein operates within carbohydrate degradation; pentose phosphate pathway; D-ribose 5-phosphate from D-ribulose 5-phosphate (non-oxidative stage): step 1/1. In terms of biological role, catalyzes the reversible conversion of ribose-5-phosphate to ribulose 5-phosphate. In Streptococcus gordonii (strain Challis / ATCC 35105 / BCRC 15272 / CH1 / DL1 / V288), this protein is Ribose-5-phosphate isomerase A.